We begin with the raw amino-acid sequence, 239 residues long: 2,3,4,5-tetrahydropyridine-2,6-dicarboxylate N-acetyltransferase (239 aa).

It belongs to the transferase hexapeptide repeat family. DapH subfamily.

The catalysed reaction is (S)-2,3,4,5-tetrahydrodipicolinate + acetyl-CoA + H2O = L-2-acetamido-6-oxoheptanedioate + CoA. Its pathway is amino-acid biosynthesis; L-lysine biosynthesis via DAP pathway; LL-2,6-diaminopimelate from (S)-tetrahydrodipicolinate (acetylase route): step 1/3. Catalyzes the transfer of an acetyl group from acetyl-CoA to tetrahydrodipicolinate. The chain is 2,3,4,5-tetrahydropyridine-2,6-dicarboxylate N-acetyltransferase from Staphylococcus carnosus (strain TM300).